We begin with the raw amino-acid sequence, 377 residues long: Chaperone protein DnaJ (377 aa).

Residues 5-70 (DYYEVLGVSR…DKKAAYDQFG (66 aa)) enclose the J domain. The CR-type zinc-finger motif lies at 133-211 (GLTKELRIPT…CHGDGRVEKS (79 aa)). Residues Cys-146, Cys-149, Cys-163, Cys-166, Cys-185, Cys-188, Cys-199, and Cys-202 each contribute to the Zn(2+) site. CXXCXGXG motif repeat units lie at residues 146–153 (CDLCEGSG), 163–170 (CGTCHGQG), 185–192 (CPTCHGRG), and 199–206 (CSKCHGDG).

The protein belongs to the DnaJ family. In terms of assembly, homodimer. Requires Zn(2+) as cofactor.

The protein localises to the cytoplasm. Its function is as follows. Participates actively in the response to hyperosmotic and heat shock by preventing the aggregation of stress-denatured proteins and by disaggregating proteins, also in an autonomous, DnaK-independent fashion. Unfolded proteins bind initially to DnaJ; upon interaction with the DnaJ-bound protein, DnaK hydrolyzes its bound ATP, resulting in the formation of a stable complex. GrpE releases ADP from DnaK; ATP binding to DnaK triggers the release of the substrate protein, thus completing the reaction cycle. Several rounds of ATP-dependent interactions between DnaJ, DnaK and GrpE are required for fully efficient folding. Also involved, together with DnaK and GrpE, in the DNA replication of plasmids through activation of initiation proteins. The polypeptide is Chaperone protein DnaJ (Shewanella baltica (strain OS195)).